The sequence spans 405 residues: Succinyl-CoA--L-malate CoA-transferase beta subunit (405 aa).

The Nucleophile role is filled by Asp-175.

It belongs to the CoA-transferase III family. Forms a large complex composed of six heterodimers (alpha, beta).

It catalyses the reaction succinyl-CoA + (S)-malate = (S)-malyl-CoA + succinate. The catalysed reaction is (3S)-citramalate + succinyl-CoA = (3S)-citramalyl-CoA + succinate. In terms of biological role, involved in the 3-hydroxypropionate cycle used for autotrophic carbon dioxide fixation. Catalyzes the transfer of CoA moiety from succinyl-CoA to L-malate to yield L-malyl-CoA. This Chloroflexus aurantiacus (strain ATCC 29366 / DSM 635 / J-10-fl) protein is Succinyl-CoA--L-malate CoA-transferase beta subunit (smtB).